The primary structure comprises 76 residues: Alpha/kappa-conotoxin-like fe14.1 (76 aa).

Positions 1–24 (MPSVRSVTCCCLLWMMLSVQLVTP) are cleaved as a signal peptide. Positions 25-39 (GSPGTAQLSGHRTAR) are excised as a propeptide. 2 disulfide bridges follow: Cys-46–Cys-61 and Cys-50–Cys-63. At Arg-64 the chain carries Arginine amide. The propeptide occupies 65–76 (GKRDVVSSSMAV).

The protein belongs to the conotoxin J superfamily. As to expression, expressed by the venom duct.

It is found in the secreted. Highly inhibits both nicotinic acetylcholine receptors (neuronal (alpha-3/beta-4) and muscular (alpha-1/beta-1/epsilon/delta) subtypes) and the voltage-gated potassium channel Kv1.6/KCNA6 subtype. In Conus ferrugineus (Cone snail), this protein is Alpha/kappa-conotoxin-like fe14.1.